A 332-amino-acid polypeptide reads, in one-letter code: Lipoyl synthase (332 aa).

Residues C74, C79, C85, C100, C104, C107, and S314 each coordinate [4Fe-4S] cluster. The Radical SAM core domain maps to 85–303 (CFGKGTATFM…EEKAYEMGFS (219 aa)).

Belongs to the radical SAM superfamily. Lipoyl synthase family. [4Fe-4S] cluster is required as a cofactor.

It localises to the cytoplasm. The catalysed reaction is [[Fe-S] cluster scaffold protein carrying a second [4Fe-4S](2+) cluster] + N(6)-octanoyl-L-lysyl-[protein] + 2 oxidized [2Fe-2S]-[ferredoxin] + 2 S-adenosyl-L-methionine + 4 H(+) = [[Fe-S] cluster scaffold protein] + N(6)-[(R)-dihydrolipoyl]-L-lysyl-[protein] + 4 Fe(3+) + 2 hydrogen sulfide + 2 5'-deoxyadenosine + 2 L-methionine + 2 reduced [2Fe-2S]-[ferredoxin]. Its pathway is protein modification; protein lipoylation via endogenous pathway; protein N(6)-(lipoyl)lysine from octanoyl-[acyl-carrier-protein]: step 2/2. In terms of biological role, catalyzes the radical-mediated insertion of two sulfur atoms into the C-6 and C-8 positions of the octanoyl moiety bound to the lipoyl domains of lipoate-dependent enzymes, thereby converting the octanoylated domains into lipoylated derivatives. The polypeptide is Lipoyl synthase (Polaromonas naphthalenivorans (strain CJ2)).